Consider the following 307-residue polypeptide: Ribosomal protein uL3 glutamine methyltransferase (307 aa).

The protein belongs to the protein N5-glutamine methyltransferase family. PrmB subfamily.

It carries out the reaction L-glutaminyl-[ribosomal protein uL3] + S-adenosyl-L-methionine = N(5)-methyl-L-glutaminyl-[ribosomal protein uL3] + S-adenosyl-L-homocysteine + H(+). Functionally, methylates large ribosomal subunit protein uL3 on a specific glutamine residue. This is Ribosomal protein uL3 glutamine methyltransferase from Burkholderia pseudomallei (strain K96243).